A 371-amino-acid polypeptide reads, in one-letter code: Otolith matrix protein 1 (371 aa).

A signal peptide spans 1-21; sequence MDLPGGHLAVVLFLFVLVSMS. The Transferrin-like domain maps to 27–367; the sequence is IRWCTVSDAE…YTTILRAFEC (341 aa).

As to quaternary structure, interacts with OTOL1.

Its subcellular location is the secreted. Functionally, required for normal otolith growth and deposition of otolin-1 in the otolith. This chain is Otolith matrix protein 1 (otomp), found in Danio rerio (Zebrafish).